Here is a 356-residue protein sequence, read N- to C-terminus: C-C chemokine receptor 1-like protein 1 (356 aa).

At 1-32 the chain is on the extracellular side; the sequence is MEIPAVTEPSYNTVAKNDFMSGFLCFSINVRA. Residues 33-60 form a helical membrane-spanning segment; the sequence is FGITVLTPLYSLVFIIGVIGHVLVVLVL. Residues 61–67 are Cytoplasmic-facing; the sequence is IQHKRLR. Residues 68–92 traverse the membrane as a helical segment; sequence NMTSIYLFNLAISDLVFLSTLPFWV. Over 93-108 the chain is Extracellular; sequence DYIMKGDWIFGNAMCK. The cysteines at positions 107 and 184 are disulfide-linked. Residues 109 to 130 form a helical membrane-spanning segment; that stretch reads FVSGFYYLGLYSDMFFITLLTI. The Cytoplasmic portion of the chain corresponds to 131-147; sequence DRYLAVVHVVFALRART. The chain crosses the membrane as a helical span at residues 148-172; the sequence is VTFGIISSIITWVLAALVSIPCLYV. Residues 173 to 198 are Extracellular-facing; it reads FKSQMEFTYHTCRAILPRKSLIRFLR. A helical transmembrane segment spans residues 199 to 224; sequence FQALTMNILGLILPLLAMIICYTRII. At 225–240 the chain is on the cytoplasmic side; it reads NVLHRRPNKKKAKVMR. The helical transmembrane segment at 241 to 265 threads the bilayer; that stretch reads LIFVITLLFFLLLAPYYLAAFVSAF. At 266-282 the chain is on the extracellular side; it reads EDVLFTPSCLRSQQVDL. The chain crosses the membrane as a helical span at residues 283 to 306; the sequence is SLMITEALAYTHCCVNPVIYVFVG. The Cytoplasmic portion of the chain corresponds to 307-356; it reads KRFRKYLWQLFRRHTAITLPQWLPFLSVDRAQRASATPPSTVEIETSADL.

The protein belongs to the G-protein coupled receptor 1 family. As to expression, detected in the spleen, liver and leukocytes.

It localises to the cell membrane. Probable receptor for a C-C type chemokine. The sequence is that of C-C chemokine receptor 1-like protein 1 (Ccr1l1) from Mus musculus (Mouse).